Reading from the N-terminus, the 859-residue chain is Bifunctional uridylyltransferase/uridylyl-removing enzyme (859 aa).

Positions 1–325 are uridylyltransferase; sequence MSAHAAPSPE…PATSGITRVL (325 aa). The uridylyl-removing stretch occupies residues 326-682; sequence SHDRFVEKQG…ARPSPIGDAL (357 aa). One can recognise an HD domain in the interval 444 to 566; sequence VDQHILMVLR…VGNERYLTAL (123 aa). 2 ACT domains span residues 683 to 762 and 791 to 859; these read QVLV…PEPS and ILSV…AIAV.

It belongs to the GlnD family. It depends on Mg(2+) as a cofactor.

The catalysed reaction is [protein-PII]-L-tyrosine + UTP = [protein-PII]-uridylyl-L-tyrosine + diphosphate. The enzyme catalyses [protein-PII]-uridylyl-L-tyrosine + H2O = [protein-PII]-L-tyrosine + UMP + H(+). With respect to regulation, uridylyltransferase (UTase) activity is inhibited by glutamine, while glutamine activates uridylyl-removing (UR) activity. Functionally, modifies, by uridylylation and deuridylylation, the PII regulatory proteins (GlnB and homologs), in response to the nitrogen status of the cell that GlnD senses through the glutamine level. Under low glutamine levels, catalyzes the conversion of the PII proteins and UTP to PII-UMP and PPi, while under higher glutamine levels, GlnD hydrolyzes PII-UMP to PII and UMP (deuridylylation). Thus, controls uridylylation state and activity of the PII proteins, and plays an important role in the regulation of nitrogen fixation and metabolism. This chain is Bifunctional uridylyltransferase/uridylyl-removing enzyme, found in Burkholderia vietnamiensis (strain G4 / LMG 22486) (Burkholderia cepacia (strain R1808)).